Consider the following 286-residue polypeptide: Bifunctional protein FolD 2 (286 aa).

NADP(+) is bound by residues 165 to 167 (GRG), Thr192, and Ile233.

The protein belongs to the tetrahydrofolate dehydrogenase/cyclohydrolase family. Homodimer.

It catalyses the reaction (6R)-5,10-methylene-5,6,7,8-tetrahydrofolate + NADP(+) = (6R)-5,10-methenyltetrahydrofolate + NADPH. The enzyme catalyses (6R)-5,10-methenyltetrahydrofolate + H2O = (6R)-10-formyltetrahydrofolate + H(+). Its pathway is one-carbon metabolism; tetrahydrofolate interconversion. Its function is as follows. Catalyzes the oxidation of 5,10-methylenetetrahydrofolate to 5,10-methenyltetrahydrofolate and then the hydrolysis of 5,10-methenyltetrahydrofolate to 10-formyltetrahydrofolate. The protein is Bifunctional protein FolD 2 of Salinispora arenicola (strain CNS-205).